A 288-amino-acid chain; its full sequence is ATP synthase gamma chain (288 aa).

Belongs to the ATPase gamma chain family. In terms of assembly, F-type ATPases have 2 components, CF(1) - the catalytic core - and CF(0) - the membrane proton channel. CF(1) has five subunits: alpha(3), beta(3), gamma(1), delta(1), epsilon(1). CF(0) has three main subunits: a, b and c.

The protein localises to the cell membrane. Produces ATP from ADP in the presence of a proton gradient across the membrane. The gamma chain is believed to be important in regulating ATPase activity and the flow of protons through the CF(0) complex. The polypeptide is ATP synthase gamma chain (Macrococcus caseolyticus (strain JCSC5402) (Macrococcoides caseolyticum)).